The primary structure comprises 188 residues: Ribosome-recycling factor (188 aa).

Belongs to the RRF family.

Its subcellular location is the cytoplasm. In terms of biological role, responsible for the release of ribosomes from messenger RNA at the termination of protein biosynthesis. May increase the efficiency of translation by recycling ribosomes from one round of translation to another. This chain is Ribosome-recycling factor, found in Caulobacter sp. (strain K31).